We begin with the raw amino-acid sequence, 181 residues long: Adenine phosphoribosyltransferase (181 aa).

This sequence belongs to the purine/pyrimidine phosphoribosyltransferase family. Homodimer.

The protein resides in the cytoplasm. It catalyses the reaction AMP + diphosphate = 5-phospho-alpha-D-ribose 1-diphosphate + adenine. It functions in the pathway purine metabolism; AMP biosynthesis via salvage pathway; AMP from adenine: step 1/1. Functionally, catalyzes a salvage reaction resulting in the formation of AMP, that is energically less costly than de novo synthesis. This chain is Adenine phosphoribosyltransferase, found in Aeromonas salmonicida (strain A449).